We begin with the raw amino-acid sequence, 423 residues long: Glucose-1-phosphate adenylyltransferase 1 (423 aa).

Alpha-D-glucose 1-phosphate contacts are provided by residues Tyr-111, Gly-176, 191–192 (EK), and Ser-209.

It belongs to the bacterial/plant glucose-1-phosphate adenylyltransferase family. Homotetramer.

The catalysed reaction is alpha-D-glucose 1-phosphate + ATP + H(+) = ADP-alpha-D-glucose + diphosphate. The protein operates within glycan biosynthesis; glycogen biosynthesis. In terms of biological role, involved in the biosynthesis of ADP-glucose, a building block required for the elongation reactions to produce glycogen. Catalyzes the reaction between ATP and alpha-D-glucose 1-phosphate (G1P) to produce pyrophosphate and ADP-Glc. This chain is Glucose-1-phosphate adenylyltransferase 1, found in Alkalilimnicola ehrlichii (strain ATCC BAA-1101 / DSM 17681 / MLHE-1).